The following is a 260-amino-acid chain: MIETYSQPSPRSVATGLPASMKIFMYLLTVFLITQMIGSVLFAVYLHRRLDKVEEEVNLHEDFVFIKKLKRCNKGEGSLSLLNCEEMRRQFEDLVKDITLNKEEKKENSFEMQRGDEDPQIAAHVVSEANSNAASVLQWAKKGYYTMKSNLVMLENGKQLTVKREGLYYVYTQVTFCSNREPSSQRPFIVGLWLKPSSGSERILLKAANTHSSSQLCEQQSVHLGGVFELQAGASVFVNVTEASQVIHRVGFSSFGLLKL.

Residues 1 to 22 (MIETYSQPSPRSVATGLPASMK) lie on the Cytoplasmic side of the membrane. The chain crosses the membrane as a helical; Signal-anchor for type II membrane protein span at residues 23–46 (IFMYLLTVFLITQMIGSVLFAVYL). Residues 47–260 (HRRLDKVEEE…GFSSFGLLKL (214 aa)) are Extracellular-facing. The THD domain occupies 121 to 260 (IAAHVVSEAN…GFSSFGLLKL (140 aa)). Cys177 and Cys217 are joined by a disulfide. Asn239 is a glycosylation site (N-linked (GlcNAc...) asparagine).

The protein belongs to the tumor necrosis factor family. As to quaternary structure, homotrimer. Interacts with CD28. CD40 ligand, soluble form: Exists as either a monomer or a homotrimer. Forms a ternary complex between CD40 and integrins for CD40-CD40LG signaling. In terms of processing, the soluble form derives from the membrane form by proteolytic processing. Specifically expressed on activated CD4+ T-lymphocytes.

It localises to the cell membrane. It is found in the cell surface. Its subcellular location is the secreted. Its function is as follows. Cytokine that acts as a ligand to CD40/TNFRSF5. Costimulates T-cell proliferation and cytokine production. Its cross-linking on T-cells generates a costimulatory signal which enhances the production of IL4 and IL10 in conjunction with the TCR/CD3 ligation and CD28 costimulation. Induces the activation of NF-kappa-B. Induces the activation of kinases MAPK8 and PAK2 in T-cells. Mediates B-cell proliferation in the absence of co-stimulus as well as IgE production in the presence of IL4. Involved in immunoglobulin class switching. Functionally, acts as a ligand for integrins, specifically ITGA5:ITGB1 and ITGAV:ITGB3; both integrins and the CD40 receptor are required for activation of CD40-CD40LG signaling, which have cell-type dependent effects, such as B-cell activation, NF-kappa-B signaling and anti-apoptotic signaling. The polypeptide is CD40 ligand (Cd40lg) (Mus musculus (Mouse)).